Reading from the N-terminus, the 73-residue chain is uncharacterized protein (73 aa).

A run of 2 helical transmembrane segments spans residues isoleucine 10–alanine 30 and tyrosine 42–isoleucine 62.

It localises to the cell membrane. This is an uncharacterized protein from Archaeoglobus fulgidus (strain ATCC 49558 / DSM 4304 / JCM 9628 / NBRC 100126 / VC-16).